The primary structure comprises 483 residues: Altronate oxidoreductase (483 aa).

18–29 (IIQFGEGNFLRA) contributes to the NAD(+) binding site.

It belongs to the mannitol dehydrogenase family. UxaB subfamily.

It catalyses the reaction D-altronate + NAD(+) = keto-D-tagaturonate + NADH + H(+). It participates in carbohydrate metabolism; pentose and glucuronate interconversion. This is Altronate oxidoreductase from Escherichia coli (strain 55989 / EAEC).